The sequence spans 147 residues: Bis(5'-nucleosyl)-tetraphosphatase [asymmetrical] (147 aa).

The residue at position 2 (A2) is an N-acetylalanine. The region spanning 2–139 (ALRACGLIIF…EMKAALQEGH (138 aa)) is the Nudix hydrolase domain. Residues 43 to 64 (GHVEPGESDLETALRETQEEAG) carry the Nudix box motif.

The protein belongs to the Nudix hydrolase family. The cofactor is a divalent metal cation.

The catalysed reaction is P(1),P(4)-bis(5'-guanosyl) tetraphosphate + H2O = GMP + GTP + 2 H(+). It catalyses the reaction a 5'-end CoA-ribonucleoside in mRNA + H2O = a 5'-end phospho-adenosine-phospho-ribonucleoside in mRNA + (R)-4'-phosphopantetheine + 2 H(+). The enzyme catalyses a 5'-end FAD-phospho-ribonucleoside in mRNA + H2O = a 5'-end phospho-adenosine-phospho-ribonucleoside in mRNA + FMN + 2 H(+). Functionally, catalyzes the asymmetric hydrolysis of diadenosine 5',5'''-P1,P4-tetraphosphate (Ap4A) to yield AMP and ATP. Exhibits decapping activity towards FAD-capped RNAs and dpCoA-capped RNAs in vitro. This is Bis(5'-nucleosyl)-tetraphosphatase [asymmetrical] (NUDT2) from Bos taurus (Bovine).